A 647-amino-acid polypeptide reads, in one-letter code: Threonine--tRNA ligase (647 aa).

Positions 1-61 (MIKITFPDGA…EEDGSIEIVT (61 aa)) constitute a TGS domain. A catalytic region spans residues 240–538 (DHRKLGKELD…LIETYKGAFP (299 aa)). Cys334, His385, and His515 together coordinate Zn(2+).

It belongs to the class-II aminoacyl-tRNA synthetase family. In terms of assembly, homodimer. Requires Zn(2+) as cofactor.

The protein localises to the cytoplasm. The enzyme catalyses tRNA(Thr) + L-threonine + ATP = L-threonyl-tRNA(Thr) + AMP + diphosphate + H(+). Its function is as follows. Catalyzes the attachment of threonine to tRNA(Thr) in a two-step reaction: L-threonine is first activated by ATP to form Thr-AMP and then transferred to the acceptor end of tRNA(Thr). Also edits incorrectly charged L-seryl-tRNA(Thr). The protein is Threonine--tRNA ligase of Streptococcus pyogenes serotype M6 (strain ATCC BAA-946 / MGAS10394).